A 620-amino-acid polypeptide reads, in one-letter code: Glutathione-regulated potassium-efflux system protein KefC (620 aa).

The next 12 helical transmembrane spans lie at 4–24, 26–46, 54–74, 90–110, 114–134, 149–169, 178–198, 218–238, 270–290, 294–314, 327–347, and 359–379; these read HTLV…PIAV, LGLG…LWGL, SILH…GLEL, GALQ…LLGL, VAEL…MQAM, FAVL…IPLL, MGAF…VVLL, VFSA…EEVG, GLLL…GTLI, LRIV…LWLI, WFAV…GAAQ, and SLTL…VILN. Residues 399–518 form the RCK N-terminal domain; it reads QPRVIIAGFG…AGVEKPERET (120 aa). The segment at 597 to 620 is disordered; sequence GWQGTEEGKHTGNMADEPETKPSS.

It belongs to the monovalent cation:proton antiporter 2 (CPA2) transporter (TC 2.A.37) family. KefC subfamily. In terms of assembly, homodimer. Interacts with the regulatory subunit KefF.

Its subcellular location is the cell inner membrane. Functionally, pore-forming subunit of a potassium efflux system that confers protection against electrophiles. Catalyzes K(+)/H(+) antiport. This is Glutathione-regulated potassium-efflux system protein KefC from Shigella flexneri serotype 5b (strain 8401).